The following is a 173-amino-acid chain: 2-C-methyl-D-erythritol 2,4-cyclodiphosphate synthase (173 aa).

A divalent metal cation contacts are provided by Asp17 and His19. 4-CDP-2-C-methyl-D-erythritol 2-phosphate is bound by residues 17–19 (DVH) and 49–50 (HS). His57 is an a divalent metal cation binding site. Residues 76–80 (FPNTD), 147–150 (TTTE), and Arg157 each bind 4-CDP-2-C-methyl-D-erythritol 2-phosphate.

This sequence belongs to the IspF family. As to quaternary structure, homotrimer. A divalent metal cation is required as a cofactor.

The catalysed reaction is 4-CDP-2-C-methyl-D-erythritol 2-phosphate = 2-C-methyl-D-erythritol 2,4-cyclic diphosphate + CMP. Its pathway is isoprenoid biosynthesis; isopentenyl diphosphate biosynthesis via DXP pathway; isopentenyl diphosphate from 1-deoxy-D-xylulose 5-phosphate: step 4/6. Involved in the biosynthesis of isopentenyl diphosphate (IPP) and dimethylallyl diphosphate (DMAPP), two major building blocks of isoprenoid compounds. Catalyzes the conversion of 4-diphosphocytidyl-2-C-methyl-D-erythritol 2-phosphate (CDP-ME2P) to 2-C-methyl-D-erythritol 2,4-cyclodiphosphate (ME-CPP) with a corresponding release of cytidine 5-monophosphate (CMP). This Ehrlichia ruminantium (strain Welgevonden) protein is 2-C-methyl-D-erythritol 2,4-cyclodiphosphate synthase.